A 615-amino-acid chain; its full sequence is Medium-chain acyl-CoA ligase ACSF2, mitochondrial (615 aa).

A mitochondrion-targeting transit peptide spans 1–49 (MAVYLGMLRLGRLCVASLGARGPRTPLSRPWPNSKLQGVRAFSSGMVDC). An N6-acetyllysine modification is found at lysine 179. Lysine 182 is subject to N6-acetyllysine; alternate. The residue at position 182 (lysine 182) is an N6-succinyllysine; alternate. The residue at position 199 (lysine 199) is an N6-acetyllysine. ATP is bound at residue 263–271 (TSGTTGNPK). Lysine 340 and lysine 398 each carry N6-acetyllysine. The residue at position 478 (lysine 478) is an N6-succinyllysine. ATP-binding residues include aspartate 493 and arginine 508. Lysine 510 bears the N6-acetyllysine mark. Residues lysine 544 and lysine 570 each carry the N6-acetyllysine; alternate modification. Residues lysine 544 and lysine 570 each carry the N6-succinyllysine; alternate modification. Lysine 599 is a binding site for ATP. N6-succinyllysine is present on lysine 599.

Belongs to the ATP-dependent AMP-binding enzyme family.

Its subcellular location is the mitochondrion. The catalysed reaction is a medium-chain fatty acid + ATP + CoA = a medium-chain fatty acyl-CoA + AMP + diphosphate. It carries out the reaction octanoate + ATP + CoA = octanoyl-CoA + AMP + diphosphate. Functionally, acyl-CoA synthases catalyze the initial reaction in fatty acid metabolism, by forming a thioester with CoA. Has some preference toward medium-chain substrates. Plays a role in adipocyte differentiation. The polypeptide is Medium-chain acyl-CoA ligase ACSF2, mitochondrial (Rattus norvegicus (Rat)).